The chain runs to 210 residues: Thymidylate kinase (210 aa).

10–17 (GPEGAGKS) is a binding site for ATP.

This sequence belongs to the thymidylate kinase family.

It carries out the reaction dTMP + ATP = dTDP + ADP. Phosphorylation of dTMP to form dTDP in both de novo and salvage pathways of dTTP synthesis. The sequence is that of Thymidylate kinase from Pseudomonas aeruginosa (strain LESB58).